Reading from the N-terminus, the 157-residue chain is MRIGHGYDVHRFCDGDFITLGGVRIPHKYGLLAHSDGDVLLHALSDALLGAAALGDIGKHFPDTDPQFKGADSRALLRHVVGIVRAKGWKVGNVDATIVAQAPKMAPHIETMRQLIAEDLQVELDQVNVKATTTEKLGFTGREEGIAVHSVALLLPA.

Residues aspartate 8 and histidine 10 each coordinate a divalent metal cation. 4-CDP-2-C-methyl-D-erythritol 2-phosphate-binding positions include 8–10 (DVH) and 34–35 (HS). Residue histidine 42 coordinates a divalent metal cation. 4-CDP-2-C-methyl-D-erythritol 2-phosphate-binding positions include 56-58 (DIG), 61-65 (FPDTD), 100-106 (AQAPKMA), 132-135 (TTTE), phenylalanine 139, and arginine 142.

Belongs to the IspF family. Homotrimer. A divalent metal cation is required as a cofactor.

The enzyme catalyses 4-CDP-2-C-methyl-D-erythritol 2-phosphate = 2-C-methyl-D-erythritol 2,4-cyclic diphosphate + CMP. It participates in isoprenoid biosynthesis; isopentenyl diphosphate biosynthesis via DXP pathway; isopentenyl diphosphate from 1-deoxy-D-xylulose 5-phosphate: step 4/6. Involved in the biosynthesis of isopentenyl diphosphate (IPP) and dimethylallyl diphosphate (DMAPP), two major building blocks of isoprenoid compounds. Catalyzes the conversion of 4-diphosphocytidyl-2-C-methyl-D-erythritol 2-phosphate (CDP-ME2P) to 2-C-methyl-D-erythritol 2,4-cyclodiphosphate (ME-CPP) with a corresponding release of cytidine 5-monophosphate (CMP). This Pseudomonas putida (strain GB-1) protein is 2-C-methyl-D-erythritol 2,4-cyclodiphosphate synthase.